Consider the following 456-residue polypeptide: Phosphomethylpyrimidine synthase (456 aa).

Residues asparagine 80, methionine 109, tyrosine 139, histidine 175, 195–197 (SRG), 236–239 (DSLR), and glutamate 275 each bind substrate. Histidine 279 lines the Zn(2+) pocket. Tyrosine 302 is a binding site for substrate. Position 343 (histidine 343) interacts with Zn(2+). [4Fe-4S] cluster-binding residues include cysteine 423, cysteine 426, and cysteine 431.

It belongs to the ThiC family. The cofactor is [4Fe-4S] cluster.

The enzyme catalyses 5-amino-1-(5-phospho-beta-D-ribosyl)imidazole + S-adenosyl-L-methionine = 4-amino-2-methyl-5-(phosphooxymethyl)pyrimidine + CO + 5'-deoxyadenosine + formate + L-methionine + 3 H(+). It functions in the pathway cofactor biosynthesis; thiamine diphosphate biosynthesis. Functionally, catalyzes the synthesis of the hydroxymethylpyrimidine phosphate (HMP-P) moiety of thiamine from aminoimidazole ribotide (AIR) in a radical S-adenosyl-L-methionine (SAM)-dependent reaction. The polypeptide is Phosphomethylpyrimidine synthase (Prochlorococcus marinus (strain MIT 9301)).